We begin with the raw amino-acid sequence, 226 residues long: Histidine biosynthesis bifunctional protein HisIE (226 aa).

The tract at residues 1–131 (MMPMNQEFIQ…STFNRPLSNT (131 aa)) is phosphoribosyl-AMP cyclohydrolase. Positions 132-226 (CSELFEVIKD…KRRQSKSNPK (95 aa)) are phosphoribosyl-ATP pyrophosphohydrolase.

The protein in the N-terminal section; belongs to the PRA-CH family. In the C-terminal section; belongs to the PRA-PH family.

It is found in the cytoplasm. It catalyses the reaction 1-(5-phospho-beta-D-ribosyl)-ATP + H2O = 1-(5-phospho-beta-D-ribosyl)-5'-AMP + diphosphate + H(+). The catalysed reaction is 1-(5-phospho-beta-D-ribosyl)-5'-AMP + H2O = 1-(5-phospho-beta-D-ribosyl)-5-[(5-phospho-beta-D-ribosylamino)methylideneamino]imidazole-4-carboxamide. It functions in the pathway amino-acid biosynthesis; L-histidine biosynthesis; L-histidine from 5-phospho-alpha-D-ribose 1-diphosphate: step 2/9. The protein operates within amino-acid biosynthesis; L-histidine biosynthesis; L-histidine from 5-phospho-alpha-D-ribose 1-diphosphate: step 3/9. The protein is Histidine biosynthesis bifunctional protein HisIE of Prochlorococcus marinus (strain SARG / CCMP1375 / SS120).